A 133-amino-acid chain; its full sequence is Covalently-linked cell wall protein 12 (133 aa).

The first 18 residues, 1-18 (MQFSTVASIAAVAAVASA), serve as a signal peptide directing secretion. Residue N21 is glycosylated (N-linked (GlcNAc...) asparagine). 3 O-linked (Man) threonine glycosylation sites follow: T23, T24, and T26. O-linked (Man) serine glycans are attached at residues S28 and S31. Residues T32, T33, T36, and T38 are each glycosylated (O-linked (Man) threonine). 2 O-linked (Man) serine glycosylation sites follow: S39 and S46. T48 carries O-linked (Man) threonine glycosylation. 2 tandem repeats follow at residues 75–88 (TTEAPKNGTSTAAP) and 91–103 (STEAPKNTTSAAP). The tract at residues 79–104 (PKNGTSTAAPVTSTEAPKNTTSAAPT) is disordered. K80 is covalently cross-linked (Glycyl lysine isopeptide (Lys-Gly) (interchain with G-Cter in ubiquitin)). N81 and N97 each carry an N-linked (GlcNAc...) asparagine glycan. A compositionally biased stretch (polar residues) spans 81–104 (NGTSTAAPVTSTEAPKNTTSAAPT). The GPI-anchor amidated glycine moiety is linked to residue G112. The propeptide at 113 to 133 (AAAKALPAAGALLAGAAALLL) is removed in mature form.

It to yeast protein YDR134C. Post-translationally, extensively O-glycosylated; glycans consist probably of single mannose residues. N-glycosylated. In terms of processing, the GPI-anchor is attached to the protein in the endoplasmic reticulum and serves to target the protein to the cell surface. There, the glucosamine-inositol phospholipid moiety is cleaved off and the GPI-modified mannoprotein is covalently attached via its lipidless GPI glycan remnant to the 1,6-beta-glucan of the outer cell wall layer.

It is found in the secreted. The protein resides in the cell wall. It localises to the membrane. In terms of biological role, component of the cell wall. May play a role in the formation of a tightly packed outer mannan layer, which protects the inner glucan. This chain is Covalently-linked cell wall protein 12 (CCW12), found in Saccharomyces cerevisiae (strain ATCC 204508 / S288c) (Baker's yeast).